The primary structure comprises 500 residues: Metacaspase-5 (500 aa).

A signal peptide spans Met-1–Pro-18. The segment at Tyr-19–Lys-63 is important for catalytic activity. N-linked (GlcNAc...) asparagine glycosylation is found at Asn-70 and Asn-113. His-147 is an active-site residue. Ca(2+)-binding residues include Asp-162, Asp-178, and Asp-179. Cys-202 is an active-site residue. Asp-209 is a binding site for Ca(2+). Residues Asn-219, Asn-235, Asn-258, Asn-264, Asn-283, and Asn-332 are each glycosylated (N-linked (GlcNAc...) asparagine). Disordered regions lie at residues Glu-358–Tyr-419 and Gln-444–Lys-500. Positions Ala-379 to Gly-389 are enriched in polar residues. Positions Gln-444–Pro-461 are enriched in low complexity.

It belongs to the peptidase C14B family.

It is found in the recycling endosome. Its function is as follows. Cysteine protease that cleaves specifically after arginine or lysine residues. The polypeptide is Metacaspase-5 (Trypanosoma brucei brucei).